We begin with the raw amino-acid sequence, 697 residues long: Elongation factor G (697 aa).

Positions 6–281 (ENIRNIGICA…AVVDYLPSPI (276 aa)) constitute a tr-type G domain. Residues 15–22 (AHIDAGKT), 79–83 (DTPGH), and 133–136 (NKMD) contribute to the GTP site.

This sequence belongs to the TRAFAC class translation factor GTPase superfamily. Classic translation factor GTPase family. EF-G/EF-2 subfamily.

The protein resides in the cytoplasm. Catalyzes the GTP-dependent ribosomal translocation step during translation elongation. During this step, the ribosome changes from the pre-translocational (PRE) to the post-translocational (POST) state as the newly formed A-site-bound peptidyl-tRNA and P-site-bound deacylated tRNA move to the P and E sites, respectively. Catalyzes the coordinated movement of the two tRNA molecules, the mRNA and conformational changes in the ribosome. The sequence is that of Elongation factor G from Rickettsia bellii (strain OSU 85-389).